Consider the following 587-residue polypeptide: Folylpolyglutamate synthase, mitochondrial (587 aa).

A mitochondrion-targeting transit peptide spans 1–42; sequence MSRARSHLRAALFLAAASARGITTQVAARRGLSAWPVPQEPS. Met-43 is modified (N-acetylmethionine). 106 to 109 lines the ATP pocket; it reads GKGS. The Mg(2+) site is built by Ser-130, Glu-200, and His-228. Residues Arg-363 and Asp-377 each coordinate ATP. The residue at position 539 (Ser-539) is a Phosphoserine.

It belongs to the folylpolyglutamate synthase family. As to quaternary structure, monomer. Requires K(+) as cofactor. The cofactor is NH4(+).

The protein resides in the mitochondrion inner membrane. It is found in the mitochondrion matrix. Its subcellular location is the cytoplasm. The enzyme catalyses (6S)-5,6,7,8-tetrahydrofolyl-(gamma-L-Glu)(n) + L-glutamate + ATP = (6S)-5,6,7,8-tetrahydrofolyl-(gamma-L-Glu)(n+1) + ADP + phosphate + H(+). The protein operates within cofactor biosynthesis; tetrahydrofolylpolyglutamate biosynthesis. With respect to regulation, activated by 10 mM sodium bicarbonate. Its function is as follows. Catalyzes conversion of folates to polyglutamate derivatives allowing concentration of folate compounds in the cell and the intracellular retention of these cofactors, which are important substrates for most of the folate-dependent enzymes that are involved in one-carbon transfer reactions involved in purine, pyrimidine and amino acid synthesis. Unsubstituted reduced folates are the preferred substrates. Metabolizes methotrexate (MTX) to polyglutamates. This Homo sapiens (Human) protein is Folylpolyglutamate synthase, mitochondrial (FPGS).